Reading from the N-terminus, the 89-residue chain is uncharacterized protein (89 aa).

Basic residues-rich tracts occupy residues 1–17 (MPPH…HGHH) and 65–89 (HHGH…HGHH). Disordered stretches follow at residues 1 to 25 (MPPH…ITPV) and 60 to 89 (LETG…HGHH).

This is an uncharacterized protein from Dictyostelium discoideum (Social amoeba).